The sequence spans 337 residues: Ral GTPase-activating protein subunit alpha-1 (337 aa).

Component of the heterodimeric RalGAP1 complex with RALGAPB. Heterodimerization is required for activity. Interacts with the HLH region of TCF3/isoform E12.

Its subcellular location is the cytoplasm. The protein resides in the nucleus. Functionally, catalytic subunit of the heterodimeric RalGAP1 complex which acts as a GTPase activator for the Ras-like small GTPases RALA and RALB. The protein is Ral GTPase-activating protein subunit alpha-1 of Sus scrofa (Pig).